Here is a 144-residue protein sequence, read N- to C-terminus: Snake venom vascular endothelial growth factor toxin VR-1 (144 aa).

The N-terminal stretch at 1–24 is a signal peptide; it reads MAAYLLAVAILFCIQGWPSGTVQG. Pyrrolidone carboxylic acid is present on Gln25. Disulfide bonds link Cys38/Cys80, Cys69/Cys115, and Cys73/Cys117. Residues 120 to 134 show a composition bias toward basic and acidic residues; it reads RWKQGEPEGPKEPRR. The disordered stretch occupies residues 120–144; the sequence is RWKQGEPEGPKEPRRGGVRAKFPFD. The propeptide occupies 134–144; it reads RGGVRAKFPFD.

This sequence belongs to the PDGF/VEGF growth factor family. Snake venom VEGF subfamily. Homodimer; disulfide-linked. Interacts with VEGF receptor-2 (KDR) with high affinity, but not with VEGF receptor-1 (Flt-1), VEGF receptor-3 (FLT4), and neuropilin-1 (NRP1). As to expression, expressed by the venom gland.

It localises to the secreted. Functionally, snake venom VEGFs may contribute to venom dispersion and prey subjugation by inducing vascular permeability and hypotension. This protein induces angiogenesis probably through VEGF receptor (KDR/VEGFR-2) signaling, as well as drastic hypotension. The hypotension is mediated by nitric oxide, which is produced by VEGF-activated endothelium NO synthase. May also induce vascular permeability. This Daboia russelii (Russel's viper) protein is Snake venom vascular endothelial growth factor toxin VR-1.